Consider the following 363-residue polypeptide: S-adenosylmethionine:tRNA ribosyltransferase-isomerase (363 aa).

It belongs to the QueA family. Monomer.

The protein localises to the cytoplasm. The catalysed reaction is 7-aminomethyl-7-carbaguanosine(34) in tRNA + S-adenosyl-L-methionine = epoxyqueuosine(34) in tRNA + adenine + L-methionine + 2 H(+). It functions in the pathway tRNA modification; tRNA-queuosine biosynthesis. In terms of biological role, transfers and isomerizes the ribose moiety from AdoMet to the 7-aminomethyl group of 7-deazaguanine (preQ1-tRNA) to give epoxyqueuosine (oQ-tRNA). The chain is S-adenosylmethionine:tRNA ribosyltransferase-isomerase from Haemophilus influenzae (strain ATCC 51907 / DSM 11121 / KW20 / Rd).